Reading from the N-terminus, the 870-residue chain is Valine--tRNA ligase (870 aa).

Positions 1–13 are enriched in polar residues; sequence MTSQTFTTSSATP. The segment at 1 to 21 is disordered; it reads MTSQTFTTSSATPPTRGVVPD. The 'HIGH' region motif lies at 63–73; that stretch reads PTVSGHLHPGH. The interval 479 to 505 is disordered; sequence YDHPLLPDESALPVDPASQPPSGYQES. The 'KMSKS' region motif lies at 595–599; sequence KMSKS. Residue lysine 598 participates in ATP binding.

Belongs to the class-I aminoacyl-tRNA synthetase family. ValS type 2 subfamily. As to quaternary structure, monomer.

The protein localises to the cytoplasm. It catalyses the reaction tRNA(Val) + L-valine + ATP = L-valyl-tRNA(Val) + AMP + diphosphate. Catalyzes the attachment of valine to tRNA(Val). As ValRS can inadvertently accommodate and process structurally similar amino acids such as threonine, to avoid such errors, it has a 'posttransfer' editing activity that hydrolyzes mischarged Thr-tRNA(Val) in a tRNA-dependent manner. The protein is Valine--tRNA ligase of Cutibacterium acnes (strain DSM 16379 / KPA171202) (Propionibacterium acnes).